We begin with the raw amino-acid sequence, 150 residues long: uncharacterized protein (150 aa).

Residues 4 to 148 enclose the Flavodoxin-like domain; sequence LILYKSIHHK…KAKEFAKSIL (145 aa).

This is an uncharacterized protein from Methanocaldococcus jannaschii (strain ATCC 43067 / DSM 2661 / JAL-1 / JCM 10045 / NBRC 100440) (Methanococcus jannaschii).